The chain runs to 277 residues: Cell death abnormality protein 2 (277 aa).

The SH2 domain maps to 14-112 (FYFPGMSRED…EASLLSAYKK (99 aa)). The 61-residue stretch at 113-173 (PIIEVVVGTF…PANYVQVQSG (61 aa)) folds into the SH3 1 domain. A disordered region spans residues 179-217 (RISKGTSQSSIGSSGNGAERFSSTSTSSENAEAHPTLPT). Low complexity predominate over residues 182–206 (KGTSQSSIGSSGNGAERFSSTSTSS). Residues 214-275 (TLPTTAKVTF…PFTYIRFNTA (62 aa)) enclose the SH3 2 domain.

The protein belongs to the CRK family. In terms of assembly, interacts with ced-5 (via C-terminus which contains a candidate SH3-binding, proline-rich region). Forms a ternary complex with ced-5 and ced-12. Interacts (via SH-2 domain) with src-1 (when activated and phosphorylated at 'Tyr-416').

Functionally, required for cell migration and engulfment of cell corpses but not for programmed cell death/apoptosis. Also has a role in the migration of the 2 gonadal distal tip cells (DTCs). The polypeptide is Cell death abnormality protein 2 (Caenorhabditis briggsae).